The primary structure comprises 371 residues: Cytochrome b (371 aa).

4 helical membrane passes run F25–I45, W69–I90, W105–L125, and F170–I190. Heme b-binding residues include H75 and H89. Heme b-binding residues include H174 and H188. Residue H193 participates in a ubiquinone binding. The next 4 membrane-spanning stretches (helical) occupy residues Y218–T238, L280–H300, L312–S332, and F339–P358.

Belongs to the cytochrome b family. In terms of assembly, the cytochrome bc1 complex contains 3 respiratory subunits (MT-CYB, CYC1 and UQCRFS1), 2 core proteins (UQCRC1 and UQCRC2) and probably 6 low-molecular weight proteins. It depends on heme b as a cofactor.

Its subcellular location is the mitochondrion inner membrane. In terms of biological role, component of the ubiquinol-cytochrome c reductase complex (complex III or cytochrome b-c1 complex) that is part of the mitochondrial respiratory chain. The b-c1 complex mediates electron transfer from ubiquinol to cytochrome c. Contributes to the generation of a proton gradient across the mitochondrial membrane that is then used for ATP synthesis. The protein is Cytochrome b (MT-CYB) of Sinomicrurus macclellandi (Macclelland's coral snake).